We begin with the raw amino-acid sequence, 33 residues long: Putative makorin-5 (33 aa).

The chain is Putative makorin-5 (MKRN9P) from Homo sapiens (Human).